Here is a 202-residue protein sequence, read N- to C-terminus: Probable cobalt-precorrin-6B C(15)-methyltransferase (decarboxylating) (202 aa).

Residues Thr29, 53–57 (GCGSG), Asp77, and Val106 contribute to the S-adenosyl-L-methionine site.

It belongs to the methyltransferase superfamily. Archaeal-type CbiT family.

It catalyses the reaction Co-precorrin-6B + S-adenosyl-L-methionine = Co-precorrin-7 + S-adenosyl-L-homocysteine + CO2. It participates in cofactor biosynthesis; adenosylcobalamin biosynthesis; cob(II)yrinate a,c-diamide from sirohydrochlorin (anaerobic route): step 8/10. Functionally, catalyzes the methylation of C-15 in cobalt-precorrin-6B followed by the decarboxylation of C-12 to form cobalt-precorrin-7. In Thermoplasma acidophilum (strain ATCC 25905 / DSM 1728 / JCM 9062 / NBRC 15155 / AMRC-C165), this protein is Probable cobalt-precorrin-6B C(15)-methyltransferase (decarboxylating).